The primary structure comprises 281 residues: 1-acyl-sn-glycerol-3-phosphate acyltransferase (281 aa).

3 helical membrane passes run 40–60 (IFVC…IMVL), 71–91 (LGNL…GIPI), and 110–130 (ASPI…VGVA). The short motif at 109–114 (HASPID) is the HXXXXD motif element.

It belongs to the 1-acyl-sn-glycerol-3-phosphate acyltransferase family.

The protein resides in the membrane. It catalyses the reaction a 1-acyl-sn-glycero-3-phosphate + an acyl-CoA = a 1,2-diacyl-sn-glycero-3-phosphate + CoA. It participates in phospholipid metabolism; CDP-diacylglycerol biosynthesis; CDP-diacylglycerol from sn-glycerol 3-phosphate: step 2/3. Converts lysophosphatidic acid (LPA) into phosphatidic acid by incorporating acyl moiety at the 2 position. This enzyme uses erucoyl-CoA as an acyl donor. The polypeptide is 1-acyl-sn-glycerol-3-phosphate acyltransferase (Limnanthes alba (White meadowfoam)).